A 475-amino-acid polypeptide reads, in one-letter code: Probable GABA permease (475 aa).

The next 12 helical transmembrane spans lie at 27-47 (VTMLSIAGVIGAGLFVGSGHA), 48-68 (IAAAGPAALLAYLIAGTLVVL), 105-125 (LYWWFWVLVIPLEAIAAAAIL), 127-147 (AWFPAIDTWIFALAVTFLLTV), 163-183 (FALLKVIAIIAFIVLGAVAIV), 211-231 (AVLGALLTTMFSFMGTEIVTI), 250-270 (VIWRIGLFYLVSIFIVISIVP), 296-316 (LIVDLVVLVAVASCLNSAIYT), 345-365 (PAVLASTAVGFLTTIVNYFAP), 368-388 (VFTFLLASSGAVALLVYLVIA), 413-433 (PWLTWAVILFIVAALSIMLIM), and 438-458 (HEVFATALLTIFTVCLGLLNA).

The protein belongs to the amino acid-polyamine-organocation (APC) superfamily. Amino acid transporter (AAT) (TC 2.A.3.1) family.

The protein resides in the membrane. Its function is as follows. Involved in the degradation of beta-alanine. This chain is Probable GABA permease (bauD), found in Pseudomonas aeruginosa (strain ATCC 15692 / DSM 22644 / CIP 104116 / JCM 14847 / LMG 12228 / 1C / PRS 101 / PAO1).